A 355-amino-acid polypeptide reads, in one-letter code: Homeobox protein knotted-1-like 12 (355 aa).

2 disordered regions span residues 52 to 82 (AAGP…GGGE) and 207 to 233 (ECVG…PRAE). The segment covering 60 to 75 (GHGHPHHGGGHHHSKH) has biased composition (basic residues). Residues 218-233 (PSGRENEPPEIDPRAE) show a composition bias toward basic and acidic residues. The region spanning 236-256 (ELKFQLLKKYSGYLSSLRQEF) is the ELK domain. Positions 257 to 320 (SKKKKKGKLP…NQRKRHWKPS (64 aa)) form a DNA-binding region, homeobox; TALE-type.

This sequence belongs to the TALE/KNOX homeobox family. Expressed in stems, rachis and inflorescence.

It localises to the nucleus. In terms of biological role, probable transcription factor that may be involved in shoot formation during embryogenesis. This Oryza sativa subsp. japonica (Rice) protein is Homeobox protein knotted-1-like 12 (OSH15).